A 98-amino-acid polypeptide reads, in one-letter code: NADH-ubiquinone oxidoreductase chain 4L (98 aa).

Helical transmembrane passes span 1 to 21 (MIPTYMNIMLAFTISLLGMLI), 29 to 49 (SLLCLEGMMMSLFIMTTLIAL), and 61 to 81 (IILLVFAACEAAVGLALLVSI).

It belongs to the complex I subunit 4L family. Core subunit of respiratory chain NADH dehydrogenase (Complex I) which is composed of 45 different subunits.

It is found in the mitochondrion inner membrane. It carries out the reaction a ubiquinone + NADH + 5 H(+)(in) = a ubiquinol + NAD(+) + 4 H(+)(out). Core subunit of the mitochondrial membrane respiratory chain NADH dehydrogenase (Complex I) which catalyzes electron transfer from NADH through the respiratory chain, using ubiquinone as an electron acceptor. Part of the enzyme membrane arm which is embedded in the lipid bilayer and involved in proton translocation. The protein is NADH-ubiquinone oxidoreductase chain 4L (MT-ND4L) of Macaca ochreata (Booted macaque).